The sequence spans 156 residues: Transcription elongation factor GreA (156 aa).

Residues 1 to 32 (MKKVRLTREGYEKLKQELEELKRKFMYEISER) adopt a coiled-coil conformation.

The protein belongs to the GreA/GreB family.

Necessary for efficient RNA polymerase transcription elongation past template-encoded arresting sites. The arresting sites in DNA have the property of trapping a certain fraction of elongating RNA polymerases that pass through, resulting in locked ternary complexes. Cleavage of the nascent transcript by cleavage factors such as GreA or GreB allows the resumption of elongation from the new 3'terminus. GreA releases sequences of 2 to 3 nucleotides. The sequence is that of Transcription elongation factor GreA from Thermotoga neapolitana (strain ATCC 49049 / DSM 4359 / NBRC 107923 / NS-E).